The sequence spans 206 residues: Small ribosomal subunit protein uS4 (206 aa).

Positions 18–44 (NIWGRPKSPVNRREYGPGQHGQRRKGK) are disordered. The S4 RNA-binding domain maps to 94 to 157 (RRLDAVVYRA…KQLAVVLEAV (64 aa)).

Belongs to the universal ribosomal protein uS4 family. In terms of assembly, part of the 30S ribosomal subunit. Contacts protein S5. The interaction surface between S4 and S5 is involved in control of translational fidelity.

Its function is as follows. One of the primary rRNA binding proteins, it binds directly to 16S rRNA where it nucleates assembly of the body of the 30S subunit. In terms of biological role, with S5 and S12 plays an important role in translational accuracy. The sequence is that of Small ribosomal subunit protein uS4 from Jannaschia sp. (strain CCS1).